Consider the following 191-residue polypeptide: Protein Ves (191 aa).

Belongs to the Ves family.

This chain is Protein Ves, found in Escherichia coli O139:H28 (strain E24377A / ETEC).